We begin with the raw amino-acid sequence, 284 residues long: UTP--glucose-1-phosphate uridylyltransferase (284 aa).

Belongs to the UDPGP type 2 family.

The enzyme catalyses alpha-D-glucose 1-phosphate + UTP + H(+) = UDP-alpha-D-glucose + diphosphate. The protein is UTP--glucose-1-phosphate uridylyltransferase (celA) of Komagataeibacter xylinus (Gluconacetobacter xylinus).